The primary structure comprises 457 residues: 1-carboxybiuret hydrolase subunit AtzE (457 aa).

Active-site charge relay system residues include Lys74 and Ser150. The active-site Acyl-ester intermediate is Ser174.

This sequence belongs to the amidase family. As to quaternary structure, heterotetramer consisting of 2 AtzE and 2 AtzG subunits.

It carries out the reaction 1-carboxybiuret + H2O = urea-1,3-dicarboxylate + NH4(+). Its pathway is xenobiotic degradation; atrazine degradation. Functionally, hydrolyzes 1-carboxybiuret to urea-1,3-dicarboxylate and NH(3). The polypeptide is 1-carboxybiuret hydrolase subunit AtzE (Pseudomonas sp. (strain ADP)).